The primary structure comprises 118 residues: Large ribosomal subunit protein bL20 (118 aa).

Belongs to the bacterial ribosomal protein bL20 family.

Its function is as follows. Binds directly to 23S ribosomal RNA and is necessary for the in vitro assembly process of the 50S ribosomal subunit. It is not involved in the protein synthesizing functions of that subunit. This chain is Large ribosomal subunit protein bL20, found in Pseudomonas aeruginosa (strain LESB58).